The primary structure comprises 568 residues: MKQSKTFIPTLREVPADAEVKSHKQLLRAGFIRQNTSGVYSYLPLAKRVLSKIETIIREEMEAINSIELLMPSLQSAELWQESGRWEKYGPELMRLKDRHDRDFALGPTHEEVITTLVRDEIKSYKKLPLTLYQIQTKFRDEKRPRFGLLRGREFIMKDAYSFHASRESLDETYDDMYRAYSNIFSRLGLNYRAVIADAGSIGGKGTHEFMVLSEIGEDTIAYSDTSDYAANIEMAEVIADYQTSDEALKEVEKVATPDQKTIEEVSAFLQVKPAHVIKSLVFDVDGELVVVLARGDHEINDIKLKNALEAGSVELASEAAIRELLGCGVGSIGPVKLPVDVKVVADHAIKSIRNGIAGANEDGFHLVNVNPERDFAVNDYLDIRFIQEGDPSPDGQGTIKFAEGIEVGHIFKLGTTYSAKMNGTFLDEQGKSQPFIMGCYGIGVSRILAAVAEHFQDENGFTWPTQLAPYDIHVVPVNTKDEVQVALADELYGLLKSYRYDVLLDDRAERAGVKFADADLIGLPVRVTVGKKATEGIVEVKFRQTGETFEWKKEEVIDRLNEFFRKN.

It belongs to the class-II aminoacyl-tRNA synthetase family. ProS type 1 subfamily. As to quaternary structure, homodimer.

It localises to the cytoplasm. It carries out the reaction tRNA(Pro) + L-proline + ATP = L-prolyl-tRNA(Pro) + AMP + diphosphate. Its function is as follows. Catalyzes the attachment of proline to tRNA(Pro) in a two-step reaction: proline is first activated by ATP to form Pro-AMP and then transferred to the acceptor end of tRNA(Pro). As ProRS can inadvertently accommodate and process non-cognate amino acids such as alanine and cysteine, to avoid such errors it has two additional distinct editing activities against alanine. One activity is designated as 'pretransfer' editing and involves the tRNA(Pro)-independent hydrolysis of activated Ala-AMP. The other activity is designated 'posttransfer' editing and involves deacylation of mischarged Ala-tRNA(Pro). The misacylated Cys-tRNA(Pro) is not edited by ProRS. This chain is Proline--tRNA ligase, found in Lysinibacillus sphaericus (strain C3-41).